Reading from the N-terminus, the 163-residue chain is Nucleotide-binding protein YajQ (163 aa).

It belongs to the YajQ family.

Its function is as follows. Nucleotide-binding protein. The polypeptide is Nucleotide-binding protein YajQ (Salmonella heidelberg (strain SL476)).